Consider the following 151-residue polypeptide: Multiprotein-bridging factor 1 (151 aa).

The disordered stretch occupies residues 1-32 (MSSDWDSVTIIGQKARVGGGGPRENVAKTSSQ). One can recognise an HTH cro/C1-type domain in the interval 86–140 (IQQARQEKKLTQKELATKVNEKPNVINDYEAGRAIPNQQLLAKLERALGVKLRGK). Positions 97–116 (QKELATKVNEKPNVINDYEA) form a DNA-binding region, H-T-H motif.

It belongs to the MBF1 family.

Its function is as follows. Transcriptional coactivator that stimulates GCN4-dependent transcriptional activity by bridging the DNA-binding region of GCN4 and TBP (SPT15), thereby recruiting TBP to GCN4-bound promoters. Involved in induction of the ribosome quality control (RQC) pathway; a pathway that degrades nascent peptide chains during problematic translation. Required to prevent stalled ribosomes from frameshifting. The chain is Multiprotein-bridging factor 1 (MBF1) from Candida albicans (strain SC5314 / ATCC MYA-2876) (Yeast).